Here is a 510-residue protein sequence, read N- to C-terminus: Probable lysine--tRNA ligase, cytoplasmic (510 aa).

It belongs to the class-II aminoacyl-tRNA synthetase family. As to quaternary structure, homodimer.

The protein localises to the cytoplasm. It carries out the reaction tRNA(Lys) + L-lysine + ATP = L-lysyl-tRNA(Lys) + AMP + diphosphate. The sequence is that of Probable lysine--tRNA ligase, cytoplasmic from Encephalitozoon cuniculi (strain GB-M1) (Microsporidian parasite).